The chain runs to 330 residues: Mycothiol acetyltransferase (330 aa).

N-acetyltransferase domains lie at 5-142 (LVTD…MPLR) and 171-328 (VRLR…APRP). Glutamate 36 is a binding site for 1D-myo-inositol 2-(L-cysteinylamino)-2-deoxy-alpha-D-glucopyranoside. An acetyl-CoA-binding site is contributed by 80–82 (VVV). A disordered region spans residues 142–161 (RDIAGDEPGGPWEAPELPEP). The 1D-myo-inositol 2-(L-cysteinylamino)-2-deoxy-alpha-D-glucopyranoside site is built by glutamate 198, lysine 238, and glutamate 254. Acetyl-CoA contacts are provided by residues 258–260 (VGV) and 265–271 (QGSGLGR). Tyrosine 292 is a 1D-myo-inositol 2-(L-cysteinylamino)-2-deoxy-alpha-D-glucopyranoside binding site. 297-302 (NEAAVR) is a binding site for acetyl-CoA.

Belongs to the acetyltransferase family. MshD subfamily. In terms of assembly, monomer.

The catalysed reaction is 1D-myo-inositol 2-(L-cysteinylamino)-2-deoxy-alpha-D-glucopyranoside + acetyl-CoA = mycothiol + CoA + H(+). In terms of biological role, catalyzes the transfer of acetyl from acetyl-CoA to desacetylmycothiol (Cys-GlcN-Ins) to form mycothiol. This Nocardiopsis dassonvillei (strain ATCC 23218 / DSM 43111 / CIP 107115 / JCM 7437 / KCTC 9190 / NBRC 14626 / NCTC 10488 / NRRL B-5397 / IMRU 509) (Actinomadura dassonvillei) protein is Mycothiol acetyltransferase.